We begin with the raw amino-acid sequence, 531 residues long: Probable mitochondrial-processing peptidase subunit beta, mitochondrial (531 aa).

A mitochondrion-targeting transit peptide spans 1-78 (MAMKNLLSLA…ENPDKRFLKY (78 aa)). A disordered region spans residues 30-50 (SAIDSVPASASPTALSPPPPH). His-141 lines the Zn(2+) pocket. Catalysis depends on Glu-144, which acts as the Proton acceptor. Zn(2+) is bound at residue His-145. Residue Glu-214 is part of the active site. Glu-221 contributes to the Zn(2+) binding site.

Belongs to the peptidase M16 family. In terms of assembly, heterodimer of an alpha subunit and a beta subunit subunits, forming the mitochondrial processing protease (MPP) in which the alpha subunit is involved in substrate recognition and binding and the beta subunit is the catalytic subunit. Component of the ubiquinol-cytochrome c oxidoreductase (cytochrome b-c1 complex, complex III, CIII), a multisubunit enzyme composed of 10 subunits. The complex is composed of 3 respiratory subunits cytochrome b (MT-CYB), cytochrome c1 (CYC1-1 or CYC1-2) and Rieske protein (UCR1-1 or UCR1-2), 2 core protein subunits MPPalpha1 (or MPPalpha2) and MPPB, and 5 low-molecular weight protein subunits QCR7-1 (or QCR7-2), UCRQ-1 (or UCRQ-2), QCR9, UCRY and probably QCR6-1 (or QCR6-2). The complex exists as an obligatory dimer and forms supercomplexes (SCs) in the inner mitochondrial membrane with NADH-ubiquinone oxidoreductase (complex I, CI), resulting in different assemblies (supercomplexes SCI(1)III(2) and SCI(2)III(4)). Zn(2+) serves as cofactor.

The protein localises to the mitochondrion. It localises to the mitochondrion inner membrane. It catalyses the reaction Release of N-terminal transit peptides from precursor proteins imported into the mitochondrion, typically with Arg in position P2.. Its activity is regulated as follows. Binding to the alpha subunit is required for catalytic activity. Functionally, catalytic subunit of the essential mitochondrial processing protease (MPP), which cleaves the mitochondrial sequence off newly imported precursors proteins. Preferentially, cleaves after an arginine at position P2. Its function is as follows. Component of the ubiquinol-cytochrome c oxidoreductase, a multisubunit transmembrane complex that is part of the mitochondrial electron transport chain which drives oxidative phosphorylation. The respiratory chain contains 3 multisubunit complexes succinate dehydrogenase (complex II, CII), ubiquinol-cytochrome c oxidoreductase (cytochrome b-c1 complex, complex III, CIII) and cytochrome c oxidase (complex IV, CIV), that cooperate to transfer electrons derived from NADH and succinate to molecular oxygen, creating an electrochemical gradient over the inner membrane that drives transmembrane transport and the ATP synthase. The cytochrome b-c1 complex catalyzes electron transfer from ubiquinol to cytochrome c, linking this redox reaction to translocation of protons across the mitochondrial inner membrane, with protons being carried across the membrane as hydrogens on the quinol. In the process called Q cycle, 2 protons are consumed from the matrix, 4 protons are released into the intermembrane space and 2 electrons are passed to cytochrome c. This Arabidopsis thaliana (Mouse-ear cress) protein is Probable mitochondrial-processing peptidase subunit beta, mitochondrial (MPPbeta).